The sequence spans 372 residues: N-methyl-L-tryptophan oxidase (372 aa).

Residue 4 to 34 (DLIIIGSGSVGAAAGYYATRAGLNVLMTDAH) coordinates FAD. S-8alpha-FAD cysteine is present on Cys308.

Belongs to the MSOX/MTOX family. MTOX subfamily. In terms of assembly, monomer. It depends on FAD as a cofactor.

The enzyme catalyses N(alpha)-methyl-L-tryptophan + O2 + H2O = L-tryptophan + formaldehyde + H2O2. Catalyzes the oxidative demethylation of N-methyl-L-tryptophan. In Escherichia coli (strain SMS-3-5 / SECEC), this protein is N-methyl-L-tryptophan oxidase.